Reading from the N-terminus, the 449-residue chain is Putative cytochrome P450 135A1 (449 aa).

C383 contributes to the heme binding site.

This sequence belongs to the cytochrome P450 family. Heme serves as cofactor.

The sequence is that of Putative cytochrome P450 135A1 (cyp135A1) from Mycobacterium tuberculosis (strain CDC 1551 / Oshkosh).